A 557-amino-acid polypeptide reads, in one-letter code: Urocanate hydratase (557 aa).

The disordered stretch occupies residues 1–20 (MSNPRHNEREVRSPRGDELN). NAD(+)-binding positions include 52–53 (GG), Q130, 176–178 (GMG), E196, R201, 242–243 (NA), 263–267 (QTSAH), 273–274 (YL), and Y322. Residue C410 is part of the active site. G492 serves as a coordination point for NAD(+).

This sequence belongs to the urocanase family. The cofactor is NAD(+).

The protein localises to the cytoplasm. It catalyses the reaction 4-imidazolone-5-propanoate = trans-urocanate + H2O. Its pathway is amino-acid degradation; L-histidine degradation into L-glutamate; N-formimidoyl-L-glutamate from L-histidine: step 2/3. Its function is as follows. Catalyzes the conversion of urocanate to 4-imidazolone-5-propionate. This is Urocanate hydratase from Brucella suis (strain ATCC 23445 / NCTC 10510).